The following is an 84-amino-acid chain: Large ribosomal subunit protein bL27 (84 aa).

The segment at 1 to 20 (MAHKKGGGSTKNGRDSNPKY) is disordered.

The protein belongs to the bacterial ribosomal protein bL27 family.

The polypeptide is Large ribosomal subunit protein bL27 (Chlorobaculum tepidum (strain ATCC 49652 / DSM 12025 / NBRC 103806 / TLS) (Chlorobium tepidum)).